A 215-amino-acid polypeptide reads, in one-letter code: Probable GTP-binding protein EngB (215 aa).

The EngB-type G domain maps to 30–204; sequence TGIEVAFAGR…RQKLDTWFSE (175 aa). Residues 38-45, 65-69, 83-86, 150-153, and 183-185 each bind GTP; these read GRSNAGKS, GRTQL, DLPG, TKAD, and FSS. Serine 45 and threonine 67 together coordinate Mg(2+).

The protein belongs to the TRAFAC class TrmE-Era-EngA-EngB-Septin-like GTPase superfamily. EngB GTPase family. It depends on Mg(2+) as a cofactor.

Functionally, necessary for normal cell division and for the maintenance of normal septation. The polypeptide is Probable GTP-binding protein EngB (Escherichia coli O1:K1 / APEC).